Consider the following 885-residue polypeptide: Leucine--tRNA ligase (885 aa).

A 'HIGH' region motif is present at residues 53–63; the sequence is PYPSGKLHMGH. The 'KMSKS' region motif lies at 631-635; that stretch reads KMSKS. Lys-634 provides a ligand contact to ATP.

This sequence belongs to the class-I aminoacyl-tRNA synthetase family.

Its subcellular location is the cytoplasm. The catalysed reaction is tRNA(Leu) + L-leucine + ATP = L-leucyl-tRNA(Leu) + AMP + diphosphate. The polypeptide is Leucine--tRNA ligase (Psychrobacter sp. (strain PRwf-1)).